Reading from the N-terminus, the 325-residue chain is ATP synthase subunit gamma, mitochondrial (325 aa).

The N-terminal 42 residues, 1–42, are a transit peptide targeting the mitochondrion; sequence MAMAVFRREGRRLLPSIAARPIAAIRSPLSSDQEEGLLGVRS.

It belongs to the ATPase gamma chain family. F-type ATPases have 2 components, CF(1) - the catalytic core - and CF(0) - the membrane proton channel. CF(1) has five subunits: alpha(3), beta(3), gamma(1), delta(1), epsilon(1). CF(0) has three main subunits: a, b and c.

It is found in the mitochondrion. It localises to the mitochondrion inner membrane. In terms of biological role, mitochondrial membrane ATP synthase (F(1)F(0) ATP synthase or Complex V) produces ATP from ADP in the presence of a proton gradient across the membrane which is generated by electron transport complexes of the respiratory chain. F-type ATPases consist of two structural domains, F(1) - containing the extramembraneous catalytic core, and F(0) - containing the membrane proton channel, linked together by a central stalk and a peripheral stalk. During catalysis, ATP synthesis in the catalytic domain of F(1) is coupled via a rotary mechanism of the central stalk subunits to proton translocation. Part of the complex F(1) domain and the central stalk which is part of the complex rotary element. The gamma subunit protrudes into the catalytic domain formed of alpha(3)beta(3). Rotation of the central stalk against the surrounding alpha(3)beta(3) subunits leads to hydrolysis of ATP in three separate catalytic sites on the beta subunits. In Arabidopsis thaliana (Mouse-ear cress), this protein is ATP synthase subunit gamma, mitochondrial (ATPC).